The sequence spans 61 residues: Chi-conotoxin MrIA (61 aa).

A signal peptide spans Met-1–Gly-19. Residues Val-20–Arg-48 constitute a propeptide that is removed on maturation. Intrachain disulfides connect Cys-52-Cys-61 and Cys-53-Cys-58. At Pro-60 the chain carries 4-hydroxyproline.

The protein belongs to the conotoxin T superfamily. In terms of tissue distribution, expressed by the venom duct.

It localises to the secreted. Chi-conotoxins inhibit the neuronal noradrenaline transporter (NET/SLC6A2). Activity has been described on both human (inhibition of norepinephrine uptake is IC(50)=1.26 uM) and rat (pIC(50)=6.21 corresponding IC(50)=0.16 uM) transporters. Acts as a reversible non-competitive inhibitor. In Conus marmoreus (Marble cone), this protein is Chi-conotoxin MrIA.